A 187-amino-acid polypeptide reads, in one-letter code: ATP synthase subunit b, chloroplastic (187 aa).

The chain crosses the membrane as a helical span at residues 29–49; it reads LAVVLGVLIYLGKGVCAGCIL.

The protein belongs to the ATPase B chain family. As to quaternary structure, F-type ATPases have 2 components, F(1) - the catalytic core - and F(0) - the membrane proton channel. F(1) has five subunits: alpha(3), beta(3), gamma(1), delta(1), epsilon(1). F(0) has four main subunits: a(1), b(1), b'(1) and c(10-14). The alpha and beta chains form an alternating ring which encloses part of the gamma chain. F(1) is attached to F(0) by a central stalk formed by the gamma and epsilon chains, while a peripheral stalk is formed by the delta, b and b' chains.

The protein resides in the plastid. It is found in the chloroplast thylakoid membrane. In terms of biological role, f(1)F(0) ATP synthase produces ATP from ADP in the presence of a proton or sodium gradient. F-type ATPases consist of two structural domains, F(1) containing the extramembraneous catalytic core and F(0) containing the membrane proton channel, linked together by a central stalk and a peripheral stalk. During catalysis, ATP synthesis in the catalytic domain of F(1) is coupled via a rotary mechanism of the central stalk subunits to proton translocation. Functionally, component of the F(0) channel, it forms part of the peripheral stalk, linking F(1) to F(0). This is ATP synthase subunit b, chloroplastic from Angiopteris evecta (Mule's foot fern).